The following is a 111-amino-acid chain: Universal stress protein B (111 aa).

The next 2 membrane-spanning stretches (helical) occupy residues 1–21 (MIST…NMAR) and 90–110 (FILT…LMIW).

The protein belongs to the universal stress protein B family.

Its subcellular location is the cell inner membrane. The protein is Universal stress protein B of Klebsiella pneumoniae (strain 342).